A 684-amino-acid chain; its full sequence is Chaperone protein HtpG (684 aa).

Positions 1–329 (MSKKGTIGVT…SPDIPLNVSR (329 aa)) are a; substrate-binding. Residues 330 to 548 (SYLQSDANVK…FMRRMRDMAQ (219 aa)) form a b region. The segment at 549–684 (LQPGMSFYGE…EFIRRSQRLL (136 aa)) is c.

It belongs to the heat shock protein 90 family. In terms of assembly, homodimer.

It is found in the cytoplasm. Functionally, molecular chaperone. Has ATPase activity. This chain is Chaperone protein HtpG, found in Porphyromonas gingivalis (strain ATCC 33277 / DSM 20709 / CIP 103683 / JCM 12257 / NCTC 11834 / 2561).